Consider the following 178-residue polypeptide: Large ribosomal subunit protein uL10 (178 aa).

It belongs to the universal ribosomal protein uL10 family. In terms of assembly, part of the ribosomal stalk of the 50S ribosomal subunit. The N-terminus interacts with L11 and the large rRNA to form the base of the stalk. The C-terminus forms an elongated spine to which L12 dimers bind in a sequential fashion forming a multimeric L10(L12)X complex.

Forms part of the ribosomal stalk, playing a central role in the interaction of the ribosome with GTP-bound translation factors. This chain is Large ribosomal subunit protein uL10, found in Dictyoglomus thermophilum (strain ATCC 35947 / DSM 3960 / H-6-12).